A 427-amino-acid chain; its full sequence is Indole diterpene prenyltransferase penD (427 aa).

77–78 (YV) provides a ligand contact to L-tryptophan. The substrate site is built by R99, K186, Y188, R259, K261, Y263, Y344, Y409, and Y413.

This sequence belongs to the tryptophan dimethylallyltransferase family.

It functions in the pathway secondary metabolite biosynthesis. In terms of biological role, indole diterpene prenyltransferase; part of the gene cluster that mediates the biosynthesis of the indole diterpenes penitrems. The geranylgeranyl diphosphate (GGPP) synthase penG catalyzes the first step in penitrem biosynthesis via conversion of farnesyl pyrophosphate and isopentyl pyrophosphate into geranylgeranyl pyrophosphate (GGPP). Condensation of indole-3-glycerol phosphate with GGPP by the prenyl transferase penC then forms 3-geranylgeranylindole (3-GGI). Epoxidation by the FAD-dependent monooxygenase penM leads to a epoxidized-GGI that is substrate of the terpene cyclase penB for cyclization to yield paspaline. Paspaline is subsequently converted to 13-desoxypaxilline by the cytochrome P450 monooxygenase penP, the latter being then converted to paxilline by the cytochrome P450 monooxygenase penQ. Paxilline is converted to beta-paxitriol via C-10 ketoreduction by the short-chain dehydrogenase PC-15 which can be monoprenylated at the C-20 by the indole diterpene prenyltransferase penD. A two-step elimination (acetylation and elimination) process performed by the O-acetyltransferase PC-16 and the P.simplicissimum ptmI-ortholog not yet identified in P.crustosum, leads to the production of the prenylated form of penijanthine. The FAD-linked oxidoreductase ptmO then converts the prenylated form of penijanthine into PC-M5 which is in turn transformed into PC-M4 by the aromatic dimethylallyltransferase PC-22. A series of oxidation steps involving 4 cytochrome P450 monooxygenases (PC-21, PC-05, PC-23, PC-20) and a FAD-dependent monooxygenase (PC-14) are required for the transformation of PC-M4 to penitrems A and E. Synthesis of these final products is proposed to proceed via penitrems D and C (PC-21, PC-05, PC-14) and penitrems B and F (PC-21, PC-05, PC-14, PC-23). The protein is Indole diterpene prenyltransferase penD of Penicillium crustosum (Blue mold fungus).